Consider the following 474-residue polypeptide: Probable protein phosphatase 2C 37 (474 aa).

The disordered stretch occupies residues 1–90 (MVMASAGVNM…RDDDGCSSTA (90 aa)). The segment covering 57-77 (LPASSASPSPSPTSSAASSDC) has biased composition (low complexity). In terms of domain architecture, PPM-type phosphatase spans 113-470 (AFGSVSLAGR…DNISVVVIDL (358 aa)). Mn(2+) contacts are provided by aspartate 152, glycine 153, and aspartate 387. The segment at 406–434 (LEDGSPTSGRRAARSGEAASSSAGAPAAA) is disordered. Low complexity predominate over residues 420-434 (SGEAASSSAGAPAAA). Position 461 (aspartate 461) interacts with Mn(2+).

The protein belongs to the PP2C family. It depends on Mg(2+) as a cofactor. Mn(2+) is required as a cofactor.

The enzyme catalyses O-phospho-L-seryl-[protein] + H2O = L-seryl-[protein] + phosphate. The catalysed reaction is O-phospho-L-threonyl-[protein] + H2O = L-threonyl-[protein] + phosphate. The protein is Probable protein phosphatase 2C 37 of Oryza sativa subsp. japonica (Rice).